The chain runs to 513 residues: Activin receptor type-2A (513 aa).

The first 19 residues, Met-1 to Gly-19, serve as a signal peptide directing secretion. Residues Ala-20–Thr-139 lie on the Extracellular side of the membrane. 5 disulfide bridges follow: Cys-30–Cys-60, Cys-50–Cys-78, Cys-85–Cys-104, Cys-91–Cys-103, and Cys-105–Cys-110. Asn-43 and Asn-66 each carry an N-linked (GlcNAc...) asparagine glycan. A helical transmembrane segment spans residues Leu-140–Met-160. Topologically, residues Tyr-161–Leu-513 are cytoplasmic. Residues Leu-192 to Leu-485 enclose the Protein kinase domain. ATP-binding positions include Lys-198–Val-206 and Lys-219. Residue Asp-322 is the Proton acceptor of the active site.

It belongs to the protein kinase superfamily. TKL Ser/Thr protein kinase family. TGFB receptor subfamily. Mg(2+) is required as a cofactor. Mn(2+) serves as cofactor. As to expression, expressed in hen anterior pituitary during the ovulatory cycle and in the ovarian follicle.

It localises to the cell membrane. It carries out the reaction L-threonyl-[receptor-protein] + ATP = O-phospho-L-threonyl-[receptor-protein] + ADP + H(+). The enzyme catalyses L-seryl-[receptor-protein] + ATP = O-phospho-L-seryl-[receptor-protein] + ADP + H(+). Its function is as follows. On ligand binding, forms a receptor complex consisting of two type II and two type I transmembrane serine/threonine kinases. Type II receptors phosphorylate and activate type I receptors which autophosphorylate, then bind and activate SMAD transcriptional regulators. Receptor for activin A, activin B and inhibin A. May modulate neuropeptide expression in dorsal root ganglia (DRG) neurons and ovarian follicle development. In Gallus gallus (Chicken), this protein is Activin receptor type-2A (ACVR2A).